Reading from the N-terminus, the 304-residue chain is uncharacterized protein (304 aa).

9 helical membrane passes run 9–29 (VFYV…SIHF), 67–87 (IILY…GNMF), 100–120 (AGSI…GIFF), 131–151 (EFYI…INSS), 159–179 (FFLG…QNLI), 189–209 (AVVI…CLAF), 222–242 (IGML…GMLM), 252–272 (ITVF…IGYL), and 278–298 (INIY…LALK). 2 consecutive EamA domains span residues 13–148 (LLMG…IFVI) and 171–298 (FIQS…LALK).

This sequence belongs to the EamA transporter family.

It is found in the cell membrane. This is an uncharacterized protein from Haemophilus influenzae (strain ATCC 51907 / DSM 11121 / KW20 / Rd).